Here is a 192-residue protein sequence, read N- to C-terminus: uncharacterized protein (192 aa).

This is an uncharacterized protein from Acidianus convivator (ATV).